The following is a 343-amino-acid chain: T-cell immunoglobulin and mucin domain-containing protein 4 (343 aa).

Residues 1 to 22 (MSKGLLLLWLVTELWWLYLTPA) form the signal peptide. An Ig-like V-type domain is found at 23–128 (ASEDTIIGFL…WFNDVKKNVR (106 aa)). The Extracellular portion of the chain corresponds to 23 to 279 (ASEDTIIGFL…KSHQINSRQT (257 aa)). Intrachain disulfides connect cysteine 40–cysteine 112, cysteine 53–cysteine 64, and cysteine 59–cysteine 111. Asparagine 220 carries an N-linked (GlcNAc...) asparagine glycan. Positions 239-258 (TGSNPGILPSTSQLTTQKTT) are disordered. Residues 248 to 258 (STSQLTTQKTT) are compositionally biased toward low complexity. The helical transmembrane segment at 280-300 (ILIIACCVGFVLMVLLFLAFL) threads the bilayer. Residues 301 to 343 (LRGKVTGANCLQRHKRPDNTEDSDSVLNDMSHGRDDEDGIFTL) are Cytoplasmic-facing. The interval 313–343 (RHKRPDNTEDSDSVLNDMSHGRDDEDGIFTL) is disordered. Residues serine 323, serine 325, and serine 331 each carry the phosphoserine modification.

It belongs to the immunoglobulin superfamily. TIM family. In terms of assembly, homodimer. Predominantly expressed in lymphoid tissues, such as spleen, lymph nodes, and Peyer patches. Also expressed in fetal liver, salivary gland, and spleen stromal cells, predominantly in the marginal zone and to a lesser extent throughout the white pulp. Not expressed in bone marrow-derived cells. Expressed mainly by antigen presenting cells (APCs) in T- and B-cell areas, but not by T- or B-lymphocytes.

It localises to the membrane. In terms of biological role, phosphatidylserine receptor that plays different role in immune response including phagocytosis of apoptotic cells and T-cell regulation. Controls T-cell activation in a bimodal fashion, decreasing the activation of naive T-cells by inducing cell cycle arrest, while increasing proliferation of activated T-cells by activating AKT1 and ERK1/2 phosphorylations and subsequent signaling pathways. Also plays a role in efferocytosis which is the process by which apoptotic cells are removed by phagocytic cells. Mechanistically, promotes the engulfment of apoptotic cells or exogenous particles by securing them to phagocytes through direct binding to phosphatidylserine present on apoptotic cells, while other engulfment receptors such as MERTK efficiently recognize apoptotic cells and mediate their ingestion. Additionally, promotes autophagy process by suppressing NLRP3 inflammasome activity via activation of STK11/PRKAA1 pathway in a phosphatidylserine-dependent mechanism. The sequence is that of T-cell immunoglobulin and mucin domain-containing protein 4 (Timd4) from Mus musculus (Mouse).